Reading from the N-terminus, the 244-residue chain is Lymphotoxin-beta (244 aa).

Over 1–18 (MGALGLEGRGGRLQGRGS) the chain is Cytoplasmic. Residues 19-48 (LLLAVAGATSLVTLLLAVPITVLAVLALVP) form a helical; Signal-anchor for type II membrane protein membrane-spanning segment. At 49-244 (QDQGGLVTDT…KTFFGAVMVG (196 aa)) the chain is on the extracellular side. In terms of domain architecture, THD spans 88-243 (PAAHLIGAPL…GKTFFGAVMV (156 aa)). An N-linked (GlcNAc...) asparagine glycan is attached at Asn222.

It belongs to the tumor necrosis factor family. As to quaternary structure, heterotrimer of either two LTB and one LTA subunits or (less prevalent) two LTA and one LTB subunits.

The protein localises to the membrane. Functionally, cytokine that binds to LTBR/TNFRSF3. May play a specific role in immune response regulation. Provides the membrane anchor for the attachment of the heterotrimeric complex to the cell surface. The chain is Lymphotoxin-beta (LTB) from Macaca mulatta (Rhesus macaque).